Reading from the N-terminus, the 113-residue chain is DNA-directed RNA polymerase subunit Rpo4 (113 aa).

This sequence belongs to the eukaryotic RPB4 RNA polymerase subunit family. As to quaternary structure, part of the 13-subunit RNA polymerase complex. Forms a stalk with Rpo7 that extends from the main structure.

The protein localises to the cytoplasm. It carries out the reaction RNA(n) + a ribonucleoside 5'-triphosphate = RNA(n+1) + diphosphate. In terms of biological role, DNA-dependent RNA polymerase (RNAP) catalyzes the transcription of DNA into RNA using the four ribonucleoside triphosphates as substrates. This subunit is less well bound than the others. The chain is DNA-directed RNA polymerase subunit Rpo4 from Saccharolobus solfataricus (strain ATCC 35092 / DSM 1617 / JCM 11322 / P2) (Sulfolobus solfataricus).